The primary structure comprises 90 residues: U7-theraphotoxin-Hhn1j (90 aa).

The first 19 residues, 1–19, serve as a signal peptide directing secretion; that stretch reads MKTAIFTVVLALAVFAVLS. Positions 20 to 50 are excised as a propeptide; that stretch reads FGWEANEKALSEEFTELIHEKEAASETEARE. Intrachain disulfides connect Cys51–Cys65, Cys58–Cys70, and Cys64–Cys81.

Belongs to the neurotoxin 10 (Hwtx-1) family. 13 (Hntx-13) subfamily. Expressed by the venom gland.

It is found in the secreted. Ion channel inhibitor. The chain is U7-theraphotoxin-Hhn1j from Cyriopagopus hainanus (Chinese bird spider).